A 610-amino-acid polypeptide reads, in one-letter code: Phosphomethylpyrimidine synthase (610 aa).

Residues asparagine 216, methionine 245, tyrosine 274, histidine 310, 330-332, 371-374, and glutamate 410 each bind substrate; these read SRG and DGLR. Position 414 (histidine 414) interacts with Zn(2+). A substrate-binding site is contributed by tyrosine 437. Histidine 478 contributes to the Zn(2+) binding site. Residues cysteine 558, cysteine 561, and cysteine 566 each coordinate [4Fe-4S] cluster.

Belongs to the ThiC family. As to quaternary structure, homodimer. It depends on [4Fe-4S] cluster as a cofactor.

It carries out the reaction 5-amino-1-(5-phospho-beta-D-ribosyl)imidazole + S-adenosyl-L-methionine = 4-amino-2-methyl-5-(phosphooxymethyl)pyrimidine + CO + 5'-deoxyadenosine + formate + L-methionine + 3 H(+). It functions in the pathway cofactor biosynthesis; thiamine diphosphate biosynthesis. In terms of biological role, catalyzes the synthesis of the hydroxymethylpyrimidine phosphate (HMP-P) moiety of thiamine from aminoimidazole ribotide (AIR) in a radical S-adenosyl-L-methionine (SAM)-dependent reaction. This is Phosphomethylpyrimidine synthase from Rhizobium etli (strain ATCC 51251 / DSM 11541 / JCM 21823 / NBRC 15573 / CFN 42).